The chain runs to 475 residues: MAAARFRGLAVAGGGESSESEDDGWEIGYLDRAAQKLKEPLPIEEKNETFKRALTAGDVALVEELLDSGISVDSSFRYGWTPLMYAASVSNVDLVRVLLDRGAKASFDKDKQTILITACSARGSEEQILKCVELLLSRNADPNVACRRLMTPIMYAARDGHPQVVALLVAHGAEVNTQDENGYTALTWAARQGHKNVVLKLLELGANKMLQTKDGKTPSEIAKRNKHLEIFNFLSLTLNPLEGKLQQLTKEETICKLLTTKSDKEKDHIFSSYTAFGDLEIFLHGLGLEHMTDLLKERDITLRHLLTMRKDEFTKNGITNKDQQKILAALKELEVEEIKFGELPEMAKLEISGDEFLNFLLKLNKQCGHLITAVQNIINELPVNSHKIVLEWASPRNFTSVCEELVGKVEDLSEEVCKLKDLIQKLQNERENDPAHIPLMEEVSTWNSRILKRTAITVCGFGFLLFICKLTFQRQ.

The interval 1–23 (MAAARFRGLAVAGGGESSESEDD) is disordered. A phosphoserine mark is found at Ser17, Ser18, and Ser20. ANK repeat units follow at residues 45 to 74 (EKNE…SVDS), 78 to 107 (YGWT…KASF), 110 to 144 (DKQT…DPNV), 148 to 177 (RLMT…EVNT), 181 to 210 (NGYT…NKML), and 214 to 243 (DGKT…PLEG). The SAM domain occupies 272-334 (SYTAFGDLEI…KILAALKELE (63 aa)).

Interacts with DDX4, PIWIL1, RANBP9 and TDRD1.

Its subcellular location is the cytoplasm. In terms of biological role, plays a central role during spermatogenesis by repressing transposable elements and preventing their mobilization, which is essential for the germline integrity. Acts via the piRNA metabolic process, which mediates the repression of transposable elements during meiosis by forming complexes composed of piRNAs and Piwi proteins and governs the methylation and subsequent repression of transposons. Its association with pi-bodies suggests a participation in the primary piRNAs metabolic process. Required prior to the pachytene stage to facilitate the production of multiple types of piRNAs, including those associated with repeats involved in the regulation of retrotransposons. May act by mediating protein-protein interactions during germ cell maturation. In Equus caballus (Horse), this protein is Ankyrin repeat, SAM and basic leucine zipper domain-containing protein 1 (ASZ1).